The chain runs to 622 residues: Iron transport multicopper oxidase FET3 (622 aa).

Residues 1–22 form the signal peptide; the sequence is MRPKLLSVEAALFLALPELARA. The Extracellular segment spans residues 23–553; that stretch reads ATRKFDFEIG…NTLPPGFTPR (531 aa). Plastocyanin-like domains are found at residues 31 to 146, 156 to 303, and 363 to 498; these read IGWV…VHDK, EEVV…VYDK, and YTEA…VEDP. A glycan (N-linked (GlcNAc...) asparagine) is linked at Asn76. Residues His82 and His84 each contribute to the Cu cation site. N-linked (GlcNAc...) asparagine glycans are attached at residues Asn89 and Asn114. 2 residues coordinate Cu cation: His126 and His128. N-linked (GlcNAc...) asparagine glycans are attached at residues Asn196, Asn200, and Asn294. Cu cation contacts are provided by His414, His417, and His419. Residue Asn440 is glycosylated (N-linked (GlcNAc...) asparagine). His479, Cys480, His481, and His485 together coordinate Cu cation. The chain crosses the membrane as a helical span at residues 554-574; it reads GIVALVFSCICGILGVAVVAW. At 575–622 the chain is on the cytoplasmic side; it reads YGFSAPVGSTSAGALSAGLVENDSGDVHSAQKGPQETVVSPTGDARSH. The tract at residues 597-622 is disordered; it reads DSGDVHSAQKGPQETVVSPTGDARSH.

The protein belongs to the multicopper oxidase family.

It is found in the cell membrane. Its function is as follows. Cell surface ferroxidase; part of the reductive iron assimilatory system (RIA), a siderophore-independent iron acquisition process. Required to oxidize Fe(2+) and release it from the transporter. Seems not to be involved in virulence. The sequence is that of Iron transport multicopper oxidase FET3 from Gibberella zeae (strain ATCC MYA-4620 / CBS 123657 / FGSC 9075 / NRRL 31084 / PH-1) (Wheat head blight fungus).